The following is a 1187-amino-acid chain: DNA-directed RNA polymerase subunit beta (1187 aa).

Positions 1150–1187 (KDEDDDPASSADDLGFNIGARPDAAAKEDQKAEEPEYQ) are disordered. Over residues 1173 to 1187 (AAAKEDQKAEEPEYQ) the composition is skewed to basic and acidic residues.

It belongs to the RNA polymerase beta chain family. The RNAP catalytic core consists of 2 alpha, 1 beta, 1 beta' and 1 omega subunit. When a sigma factor is associated with the core the holoenzyme is formed, which can initiate transcription.

The catalysed reaction is RNA(n) + a ribonucleoside 5'-triphosphate = RNA(n+1) + diphosphate. In terms of biological role, DNA-dependent RNA polymerase catalyzes the transcription of DNA into RNA using the four ribonucleoside triphosphates as substrates. The protein is DNA-directed RNA polymerase subunit beta of Bifidobacterium longum (strain DJO10A).